The primary structure comprises 207 residues: Putative 3-methyladenine DNA glycosylase (207 aa).

The protein belongs to the DNA glycosylase MPG family.

This is Putative 3-methyladenine DNA glycosylase from Listeria monocytogenes serotype 4b (strain CLIP80459).